The following is a 644-amino-acid chain: 1-deoxy-D-xylulose-5-phosphate synthase (644 aa).

Thiamine diphosphate is bound by residues His72 and 113 to 115 (GHA). Asp144 provides a ligand contact to Mg(2+). Thiamine diphosphate contacts are provided by residues 145–146 (GA), Asn174, Tyr287, and Glu370. Asn174 contacts Mg(2+).

This sequence belongs to the transketolase family. DXPS subfamily. As to quaternary structure, homodimer. Mg(2+) serves as cofactor. Thiamine diphosphate is required as a cofactor.

The enzyme catalyses D-glyceraldehyde 3-phosphate + pyruvate + H(+) = 1-deoxy-D-xylulose 5-phosphate + CO2. Its pathway is metabolic intermediate biosynthesis; 1-deoxy-D-xylulose 5-phosphate biosynthesis; 1-deoxy-D-xylulose 5-phosphate from D-glyceraldehyde 3-phosphate and pyruvate: step 1/1. Its function is as follows. Catalyzes the acyloin condensation reaction between C atoms 2 and 3 of pyruvate and glyceraldehyde 3-phosphate to yield 1-deoxy-D-xylulose-5-phosphate (DXP). The protein is 1-deoxy-D-xylulose-5-phosphate synthase of Prochlorococcus marinus (strain MIT 9313).